The primary structure comprises 206 residues: Large ribosomal subunit protein uL4 (206 aa).

Positions 43 to 78 (ARSGNRKQKDREEVHHTTKKPWRQKGTGRARAGMSS) are disordered. A compositionally biased stretch (basic and acidic residues) spans 49–58 (KQKDREEVHH). Positions 59–70 (TTKKPWRQKGTG) are enriched in basic residues.

It belongs to the universal ribosomal protein uL4 family. Part of the 50S ribosomal subunit.

Its function is as follows. One of the primary rRNA binding proteins, this protein initially binds near the 5'-end of the 23S rRNA. It is important during the early stages of 50S assembly. It makes multiple contacts with different domains of the 23S rRNA in the assembled 50S subunit and ribosome. In terms of biological role, forms part of the polypeptide exit tunnel. The polypeptide is Large ribosomal subunit protein uL4 (Janthinobacterium sp. (strain Marseille) (Minibacterium massiliensis)).